Reading from the N-terminus, the 200-residue chain is dTTP/UTP pyrophosphatase (200 aa).

Catalysis depends on Asp80, which acts as the Proton acceptor.

It belongs to the Maf family. YhdE subfamily. Requires a divalent metal cation as cofactor.

It localises to the cytoplasm. It carries out the reaction dTTP + H2O = dTMP + diphosphate + H(+). It catalyses the reaction UTP + H2O = UMP + diphosphate + H(+). In terms of biological role, nucleoside triphosphate pyrophosphatase that hydrolyzes dTTP and UTP. May have a dual role in cell division arrest and in preventing the incorporation of modified nucleotides into cellular nucleic acids. In Pasteurella multocida (strain Pm70), this protein is dTTP/UTP pyrophosphatase.